Reading from the N-terminus, the 508-residue chain is uncharacterized protein (508 aa).

The region spanning 3 to 163 is the Resolvase/invertase-type recombinase catalytic domain; the sequence is KAIAYMRFSS…LSWKKKRQDA (161 aa). The O-(5'-phospho-DNA)-serine intermediate role is filled by Ser11. Positions 175–290 form a DNA-binding region, recombinase; sequence PRWLSLDDKR…QEIRLAPFGI (116 aa).

This is an uncharacterized protein from Escherichia coli (strain K12).